The primary structure comprises 205 residues: MSKRHSAKYKIDRRMGENLWGRPKSPVNSRSYGPGQHGQRRKSKVSDFGLQLRAKQKLKGYYGNLTEKQFSRTYEEAARRKGNTSENLIALLESRLDAIVYRAKFVPTVFAARQFVNHGHVTVNGKRVNIPSYRCKAGDVIQVREKSRNMALVLEAVASNERDFAEYVSVDAKSLSATFVRAPELSEVPYPVKMEPNLVVEFYAS.

Residues methionine 1 to serine 46 form a disordered region. Positions serine 94–leucine 154 constitute an S4 RNA-binding domain.

This sequence belongs to the universal ribosomal protein uS4 family. In terms of assembly, part of the 30S ribosomal subunit. Contacts protein S5. The interaction surface between S4 and S5 is involved in control of translational fidelity.

Functionally, one of the primary rRNA binding proteins, it binds directly to 16S rRNA where it nucleates assembly of the body of the 30S subunit. Its function is as follows. With S5 and S12 plays an important role in translational accuracy. This is Small ribosomal subunit protein uS4 from Caulobacter vibrioides (strain ATCC 19089 / CIP 103742 / CB 15) (Caulobacter crescentus).